The chain runs to 490 residues: Costunolide synthase (490 aa).

The helical; Signal-anchor for type II membrane protein transmembrane segment at 3–23 (PLTIVSLAVASFLLFAFWALS) threads the bilayer. 2 N-linked (GlcNAc...) asparagine glycosylation sites follow: Asn167 and Asn255. Cys432 lines the heme pocket.

Belongs to the cytochrome P450 family. The cofactor is heme.

The protein resides in the membrane. The enzyme catalyses germacra-1(10),4,11(13)-trien-12-oate + reduced [NADPH--hemoprotein reductase] + O2 = (+)-costunolide + oxidized [NADPH--hemoprotein reductase] + 2 H2O. The protein operates within secondary metabolite biosynthesis; terpenoid biosynthesis. In terms of biological role, involved in the biosynthesis of germacrene-derived sesquiterpene lactones. Component of the parthenolide biosynthetic pathway; parthenolide and conjugates are promising anti-cancer drugs highly active against colon cancer cells. Hydroxylates germacrene A acid to 6-alpha-hydroxy-germacrne A acid, a precursor of sesquiterpene lactones that spontaneously undergoes a lactonization which yields costunolide. The protein is Costunolide synthase of Lactuca sativa (Garden lettuce).